Consider the following 363-residue polypeptide: Bonnadiene synthase (363 aa).

The Mg(2+) site is built by Asp-93, Asp-98, Asn-234, Ser-238, and Glu-242.

The protein belongs to the terpene synthase family. It depends on Mg(2+) as a cofactor.

It carries out the reaction (2E,6E,10E)-geranylgeranyl diphosphate = bonnadiene + diphosphate. The protein operates within secondary metabolite biosynthesis; terpenoid biosynthesis. In terms of biological role, diterpene synthase that catalyzes the conversion of geranylgeranyl diphosphate (GGPP) to bonnadiene. Cannot use geranyl diphosphate (GPP), farnesyl diphosphate (FPP) and geranylfarnesyl diphosphate (GFPP). The polypeptide is Bonnadiene synthase (Allokutzneria albata (Kibdelosporangium albatum)).